Here is a 180-residue protein sequence, read N- to C-terminus: Glycoprotein Xg (180 aa).

Positions 1–21 (MESWWGLPCLAFLCFLMHARG) are cleaved as a signal peptide. The Extracellular portion of the chain corresponds to 22–142 (QRDFDLADAL…GNPEGNMVAK (121 aa)). A disordered region spans residues 28–133 (ADALDDPEPT…HGGDHHSTYG (106 aa)). Positions 47–57 (KPKPPYYPQPE) are enriched in pro residues. Residues 143–163 (IVSPIVSVVVVTLLGAAASYF) form a helical membrane-spanning segment. At 164-180 (KLNNRRNCFRTHEPENV) the chain is on the cytoplasmic side.

The protein belongs to the CD99 family. Post-translationally, O-glycosylated. As to expression, expressed in erythroid tissues, including thymus, bone marrow and fetal liver, and in several nonerythroid tissues, such as heart, placenta, skeletal muscle, thyroid and trachea, as well as in skin fibroblasts. Expression is low or undetectable in other tissues.

Its subcellular location is the cell membrane. The chain is Glycoprotein Xg (XG) from Homo sapiens (Human).